Consider the following 545-residue polypeptide: Adenine deaminase (545 aa).

The protein belongs to the metallo-dependent hydrolases superfamily. Adenine deaminase family. It depends on Mn(2+) as a cofactor.

It carries out the reaction adenine + H2O + H(+) = hypoxanthine + NH4(+). The protein is Adenine deaminase of Salinibacter ruber (strain DSM 13855 / M31).